The primary structure comprises 125 residues: Phosphoribosyl-AMP cyclohydrolase (125 aa).

Mg(2+) is bound at residue Asp-86. Cys-87 contacts Zn(2+). Mg(2+) is bound by residues Asp-88 and Asp-90. Positions 103 and 110 each coordinate Zn(2+).

The protein belongs to the PRA-CH family. In terms of assembly, homodimer. Mg(2+) serves as cofactor. The cofactor is Zn(2+).

It is found in the cytoplasm. It catalyses the reaction 1-(5-phospho-beta-D-ribosyl)-5'-AMP + H2O = 1-(5-phospho-beta-D-ribosyl)-5-[(5-phospho-beta-D-ribosylamino)methylideneamino]imidazole-4-carboxamide. It functions in the pathway amino-acid biosynthesis; L-histidine biosynthesis; L-histidine from 5-phospho-alpha-D-ribose 1-diphosphate: step 3/9. Functionally, catalyzes the hydrolysis of the adenine ring of phosphoribosyl-AMP. The chain is Phosphoribosyl-AMP cyclohydrolase from Erythrobacter litoralis (strain HTCC2594).